The following is a 225-amino-acid chain: Increased recombination centers protein 22 (225 aa).

Residues 1–24 (MRFFMLIGFNLLTALSSFCAAISA) form the signal peptide. Topologically, residues 25 to 169 (NNSDNVEHEQ…PTLFEIVSPP (145 aa)) are lumenal. The chain crosses the membrane as a helical span at residues 170 to 190 (ISFFNPQFLSVQVIFLAIIGG). Over 191-225 (VSYYYMKSKTNQRPSKKSATVKKVDESWLPETYKK) the chain is Cytoplasmic. The interval 203–225 (RPSKKSATVKKVDESWLPETYKK) is disordered. A compositionally biased stretch (basic and acidic residues) spans 212–225 (KKVDESWLPETYKK).

It belongs to the IRC22 family.

The protein resides in the endoplasmic reticulum membrane. In terms of biological role, is probably involved in a pathway contributing to genomic integrity. The protein is Increased recombination centers protein 22 (IRC22) of Saccharomyces cerevisiae (strain AWRI1631) (Baker's yeast).